A 406-amino-acid polypeptide reads, in one-letter code: Bifunctional enzyme IspD/IspF (406 aa).

Residues 1–247 (MSLIRVNGEA…ALFFNPAKDT (247 aa)) are 2-C-methyl-D-erythritol 4-phosphate cytidylyltransferase. Residues 248 to 406 (FIGMGFDTHA…HVSMRYKQKL (159 aa)) are 2-C-methyl-D-erythritol 2,4-cyclodiphosphate synthase. Residues D254 and H256 each contribute to the a divalent metal cation site. Residues 254–256 (DTH) and 280–281 (HS) each bind 4-CDP-2-C-methyl-D-erythritol 2-phosphate. H288 contributes to the a divalent metal cation binding site. 4-CDP-2-C-methyl-D-erythritol 2-phosphate-binding positions include 302–304 (DIG), 307–311 (FPDND), 378–381 (TTME), F385, and K388.

It in the N-terminal section; belongs to the IspD/TarI cytidylyltransferase family. IspD subfamily. This sequence in the C-terminal section; belongs to the IspF family. The cofactor is a divalent metal cation.

It carries out the reaction 2-C-methyl-D-erythritol 4-phosphate + CTP + H(+) = 4-CDP-2-C-methyl-D-erythritol + diphosphate. The enzyme catalyses 4-CDP-2-C-methyl-D-erythritol 2-phosphate = 2-C-methyl-D-erythritol 2,4-cyclic diphosphate + CMP. It participates in isoprenoid biosynthesis; isopentenyl diphosphate biosynthesis via DXP pathway; isopentenyl diphosphate from 1-deoxy-D-xylulose 5-phosphate: step 2/6. It functions in the pathway isoprenoid biosynthesis; isopentenyl diphosphate biosynthesis via DXP pathway; isopentenyl diphosphate from 1-deoxy-D-xylulose 5-phosphate: step 4/6. Functionally, bifunctional enzyme that catalyzes the formation of 4-diphosphocytidyl-2-C-methyl-D-erythritol from CTP and 2-C-methyl-D-erythritol 4-phosphate (MEP) (IspD), and catalyzes the conversion of 4-diphosphocytidyl-2-C-methyl-D-erythritol 2-phosphate (CDP-ME2P) to 2-C-methyl-D-erythritol 2,4-cyclodiphosphate (ME-CPP) with a corresponding release of cytidine 5-monophosphate (CMP) (IspF). The polypeptide is Bifunctional enzyme IspD/IspF (Helicobacter pylori (strain P12)).